The primary structure comprises 518 residues: Triacylglycerol lipase OBL1 (518 aa).

The helical transmembrane segment at 93 to 113 (GFVVDFFLNLFSANGGFFGLL) threads the bilayer. The GXSXG signature appears at 337–341 (GHSLG). S339 functions as the Nucleophile in the catalytic mechanism. Residues D403 and H496 each act as charge relay system in the active site.

Belongs to the AB hydrolase superfamily. Lipase family. In terms of tissue distribution, expressed in pollen grains, pollen tubes, developing embryos, developing seeds and germinating seeds.

It localises to the lipid droplet. Its subcellular location is the membrane. It catalyses the reaction 1,2-di-(9Z-octadecenoyl)-glycerol + (9Z)-octadecenoate + H(+) = 1,2,3-tri-(9Z-octadecenoyl)-glycerol + H2O. The enzyme catalyses 1-(9Z-octadecenoyl)-glycerol + H2O = glycerol + (9Z)-octadecenoate + H(+). In terms of biological role, acid lipase that can hydrolyze a range of triacylglycerols without a clear preference for acyl-chains. Can also cleave 1,2-diacylglycerol, 1,3-diacylglycerol and 1-monoacylglycerol, but not phosphatidylcholine, phosphatidylethanolamine, or sterol esters. Required for pollen tube growth. Triacylglycerol hydrolysis by OBL1 may provide acyl groups for the synthesis of membrane lipids in growing pollen tubes. This Arabidopsis thaliana (Mouse-ear cress) protein is Triacylglycerol lipase OBL1.